A 435-amino-acid chain; its full sequence is Citrate synthase (435 aa).

Residues His-311 and Asp-370 contribute to the active site.

It belongs to the citrate synthase family. In terms of assembly, homohexamer.

It carries out the reaction oxaloacetate + acetyl-CoA + H2O = citrate + CoA + H(+). It participates in carbohydrate metabolism; tricarboxylic acid cycle; isocitrate from oxaloacetate: step 1/2. The polypeptide is Citrate synthase (gltA) (Rickettsia africae (strain ESF-5)).